The following is a 328-amino-acid chain: Beta-ketoacyl-[acyl-carrier-protein] synthase III (328 aa).

Residues Cys122 and His255 contribute to the active site. The interval 256–260 is ACP-binding; that stretch reads QANVR. Asn285 is a catalytic residue.

The protein belongs to the thiolase-like superfamily. FabH family. Homodimer.

The protein resides in the cytoplasm. The enzyme catalyses malonyl-[ACP] + acetyl-CoA + H(+) = 3-oxobutanoyl-[ACP] + CO2 + CoA. Its pathway is lipid metabolism; fatty acid biosynthesis. Functionally, catalyzes the condensation reaction of fatty acid synthesis by the addition to an acyl acceptor of two carbons from malonyl-ACP. Catalyzes the first condensation reaction which initiates fatty acid synthesis and may therefore play a role in governing the total rate of fatty acid production. Possesses both acetoacetyl-ACP synthase and acetyl transacylase activities. Its substrate specificity determines the biosynthesis of branched-chain and/or straight-chain of fatty acids. The sequence is that of Beta-ketoacyl-[acyl-carrier-protein] synthase III from Bordetella avium (strain 197N).